The chain runs to 129 residues: Cytochrome c' (129 aa).

7 residues coordinate heme c: Arg12, Gln13, Thr69, Glu70, Cys119, Cys122, and His123.

In terms of processing, binds 1 heme c group covalently per subunit.

Its function is as follows. Cytochrome c' is the most widely occurring bacterial c-type cytochrome. Cytochromes c' are high-spin proteins and the heme has no sixth ligand. Their exact function is not known. The sequence is that of Cytochrome c' from Rubrivivax gelatinosus (Rhodocyclus gelatinosus).